The following is a 617-amino-acid chain: V-type proton ATPase catalytic subunit A (617 aa).

257 to 264 (GAFGCGKT) lines the ATP pocket.

Belongs to the ATPase alpha/beta chains family. V-ATPase is a heteromultimeric enzyme composed of a peripheral catalytic V1 complex (components A to H) attached to an integral membrane V0 proton pore complex (components: a, c, c', c'', d, e, f and VOA1).

The protein localises to the vacuole membrane. The catalysed reaction is ATP + H2O + 4 H(+)(in) = ADP + phosphate + 5 H(+)(out). Its function is as follows. Catalytic subunit of the V1 complex of vacuolar(H+)-ATPase (V-ATPase), a multisubunit enzyme composed of a peripheral complex (V1) that hydrolyzes ATP and a membrane integral complex (V0) that translocates protons. V-ATPase is responsible for acidifying and maintaining the pH of intracellular compartments. The chain is V-type proton ATPase catalytic subunit A (VMA1) from Eremothecium gossypii (strain ATCC 10895 / CBS 109.51 / FGSC 9923 / NRRL Y-1056) (Yeast).